Consider the following 557-residue polypeptide: Hepatocyte nuclear factor 1-beta (557 aa).

A dimerization region spans residues 1–31 (MVSKLTSLQQELLSALLSSGVTKEVLVQALE). Residues 1–32 (MVSKLTSLQQELLSALLSSGVTKEVLVQALEE) enclose the HNF-p1 domain. Residues serine 49, serine 52, serine 75, and serine 80 each carry the phosphoserine modification. The interval 64-85 (TLTNGHAKGRLSGDEGSEDGDD) is disordered. Residues 93–188 (KELQALNTEE…ILRQFNQTVQ (96 aa)) enclose the POU-specific atypical domain. The homeobox; HNF1-type DNA-binding region spans 231–311 (MRRNRFKWGP…NRRKEEAFRQ (81 aa)). Positions 324–370 (HSLNPLLSHGSPHHQPSSSPPNKLSGVRYSQQGNNEVTSSSTISHHG) are disordered. Residues 328-344 (PLLSHGSPHHQPSSSPP) show a composition bias toward low complexity. The span at 351 to 370 (RYSQQGNNEVTSSSTISHHG) shows a compositional bias: polar residues.

This sequence belongs to the HNF1 homeobox family. As to quaternary structure, binds DNA as a dimer. Can form homodimer or heterodimer with HNF1-alpha. Interacts (via HNF-p1 domain) with PCBD1; the interaction increases its transactivation activity.

The protein localises to the nucleus. Transcription factor that binds to the inverted palindrome 5'-GTTAATNATTAAC-3'. Binds to the FPC element in the cAMP regulatory unit of the PLAU gene. Transcriptional activity is increased by coactivator PCBD1. This is Hepatocyte nuclear factor 1-beta (HNF1B) from Pongo abelii (Sumatran orangutan).